Here is a 376-residue protein sequence, read N- to C-terminus: Queuine tRNA-ribosyltransferase (376 aa).

The Proton acceptor role is filled by Asp-90. Residues 90–94, Asp-144, Gln-193, and Gly-220 each bind substrate; that span reads DSGGF. The tract at residues 251–257 is RNA binding; sequence GVGTPED. Catalysis depends on Asp-270, which acts as the Nucleophile. Residues 275 to 279 are RNA binding; important for wobble base 34 recognition; the sequence is TRNAR. Zn(2+) is bound by residues Cys-308, Cys-310, Cys-313, and His-339.

It belongs to the queuine tRNA-ribosyltransferase family. Homodimer. Within each dimer, one monomer is responsible for RNA recognition and catalysis, while the other monomer binds to the replacement base PreQ1. Zn(2+) is required as a cofactor.

The enzyme catalyses 7-aminomethyl-7-carbaguanine + guanosine(34) in tRNA = 7-aminomethyl-7-carbaguanosine(34) in tRNA + guanine. The protein operates within tRNA modification; tRNA-queuosine biosynthesis. In terms of biological role, catalyzes the base-exchange of a guanine (G) residue with the queuine precursor 7-aminomethyl-7-deazaguanine (PreQ1) at position 34 (anticodon wobble position) in tRNAs with GU(N) anticodons (tRNA-Asp, -Asn, -His and -Tyr). Catalysis occurs through a double-displacement mechanism. The nucleophile active site attacks the C1' of nucleotide 34 to detach the guanine base from the RNA, forming a covalent enzyme-RNA intermediate. The proton acceptor active site deprotonates the incoming PreQ1, allowing a nucleophilic attack on the C1' of the ribose to form the product. After dissociation, two additional enzymatic reactions on the tRNA convert PreQ1 to queuine (Q), resulting in the hypermodified nucleoside queuosine (7-(((4,5-cis-dihydroxy-2-cyclopenten-1-yl)amino)methyl)-7-deazaguanosine). In Cupriavidus necator (strain ATCC 17699 / DSM 428 / KCTC 22496 / NCIMB 10442 / H16 / Stanier 337) (Ralstonia eutropha), this protein is Queuine tRNA-ribosyltransferase.